Here is a 191-residue protein sequence, read N- to C-terminus: dCTP deaminase, dUMP-forming (191 aa).

Residues Lys-101–Arg-106, Asp-119, Thr-127–Glu-129, Gln-148, Tyr-162, and Gln-174 contribute to the dCTP site. Residue Glu-129 is the Proton donor/acceptor of the active site. Positions Ser-169–Val-191 are disordered. Positions Tyr-171 to Val-191 are enriched in polar residues.

Belongs to the dCTP deaminase family. As to quaternary structure, homotrimer.

It carries out the reaction dCTP + 2 H2O = dUMP + NH4(+) + diphosphate. It functions in the pathway pyrimidine metabolism; dUMP biosynthesis; dUMP from dCTP: step 1/1. In terms of biological role, bifunctional enzyme that catalyzes both the deamination of dCTP to dUTP and the hydrolysis of dUTP to dUMP without releasing the toxic dUTP intermediate. The polypeptide is dCTP deaminase, dUMP-forming (Streptomyces griseus subsp. griseus (strain JCM 4626 / CBS 651.72 / NBRC 13350 / KCC S-0626 / ISP 5235)).